The following is a 345-amino-acid chain: Phosphoribosylformylglycinamidine cyclo-ligase (345 aa).

The protein belongs to the AIR synthase family.

The protein localises to the cytoplasm. The catalysed reaction is 2-formamido-N(1)-(5-O-phospho-beta-D-ribosyl)acetamidine + ATP = 5-amino-1-(5-phospho-beta-D-ribosyl)imidazole + ADP + phosphate + H(+). It functions in the pathway purine metabolism; IMP biosynthesis via de novo pathway; 5-amino-1-(5-phospho-D-ribosyl)imidazole from N(2)-formyl-N(1)-(5-phospho-D-ribosyl)glycinamide: step 2/2. This Klebsiella pneumoniae (strain 342) protein is Phosphoribosylformylglycinamidine cyclo-ligase.